A 479-amino-acid polypeptide reads, in one-letter code: MEETNVKLSVPLSEDVIKLSALDQQIMRFYAKAVFIFERDSSKTSIDIVHHLKQGLAVTLSEIPDLAATIAPVPNSHRKDLELRIGPNSGVPFKVVDQTKQESWVYGTYPDLAAKHFPTSDIPHDILFIPQPQPSADGLPAAFLQVNIIDGGVIIAISWHHSVCDARGISILIDAWARHTATSLANGKPDLPATPAEGSRDRWRLDHGLREVTIDQLPEYTIDSSAREDPSGSYLLDRENPVTVPYSVSTWYFSASSLKALRDALAQVENDESTQFTKVEAVSALVWKHMSIARQLDRSNPDGSSLFTTRLDFRARTKPPFPDTFIGNINEPTARVRLPIAEICRASTPESLTTLAEAVRAATENTTEQSMRTLIGLVNDAPAVTDVAWKYNYFPGPDLGVTDISNIDAMKKNWGAGLGTPTCVRSYSRETGLLYLFPQDDDGGFEIQVQCEVEAVERLKADETFTRYCEFKRASAYNA.

H161 functions as the Proton acceptor in the catalytic mechanism.

It belongs to the plant acyltransferase family. Monomer.

It participates in antibiotic biosynthesis. In terms of biological role, acyltransferase; part of the gene cluster that mediates the biosynthesis of emericellamides, secondary metabolites acting as antibiotics. The biosynthesis of emericellamides initiates from the highly reducing polyketide synthase easB which catalyzes the formation of the linear polyketide chain. EasB produces several polyketides that can be further processed by the downstream enzymes. The polyketides are released from easB as linear polyketide carboxylic acids, which are converted to CoA thioesters by the acyl-CoA ligase easD. The substrates are then loaded onto the acyltransferase easC, which shuttles them to the first thiolation (T) domain of the nonribosomal peptide synthetase easA. EasA then performs condensation of the polyketides with one glycine, two alanine, one valine and one leucine residues. A last step of cyclization leads to the production of emericellamides. The protein is Acyltransferase easC of Emericella nidulans (strain FGSC A4 / ATCC 38163 / CBS 112.46 / NRRL 194 / M139) (Aspergillus nidulans).